The chain runs to 388 residues: RNA binding motif protein, X-linked-like-1 (388 aa).

The RRM domain maps to Gly-8 to Lys-86. Positions Asp-61–Lys-80 are enriched in basic and acidic residues. The segment at Asp-61 to Ile-388 is disordered. Lys-80 participates in a covalent cross-link: Glycyl lysine isopeptide (Lys-Gly) (interchain with G-Cter in SUMO2). Position 88 is a phosphoserine (Ser-88). Over residues Arg-148–Arg-161 the composition is skewed to pro residues. Basic and acidic residues-rich tracts occupy residues Pro-191–Ser-212 and Tyr-238–Asp-271. Positions Ser-320–Tyr-332 are enriched in low complexity. Basic and acidic residues-rich tracts occupy residues Ser-333–Arg-344 and Ser-377–Ile-388.

The protein resides in the nucleus. Functionally, RNA-binding protein which may be involved in pre-mRNA splicing. This chain is RNA binding motif protein, X-linked-like-1 (Rbmxl1), found in Rattus norvegicus (Rat).